Consider the following 154-residue polypeptide: Transcriptional repressor NrdR (154 aa).

Residues 3-34 (CPYCRHPDSRVVDSREADDGQLIRRRRSCPEC) fold into a zinc finger. Positions 46–136 (LAVVKRSGVT…VYRSFESLAD (91 aa)) constitute an ATP-cone domain.

This sequence belongs to the NrdR family. Zn(2+) is required as a cofactor.

Its function is as follows. Negatively regulates transcription of bacterial ribonucleotide reductase nrd genes and operons by binding to NrdR-boxes. This is Transcriptional repressor NrdR from Salinispora arenicola (strain CNS-205).